Consider the following 297-residue polypeptide: Acetylglutamate kinase (297 aa).

Residues 73-74 (GG), arginine 95, and asparagine 188 contribute to the substrate site.

It belongs to the acetylglutamate kinase family. ArgB subfamily.

It is found in the cytoplasm. It catalyses the reaction N-acetyl-L-glutamate + ATP = N-acetyl-L-glutamyl 5-phosphate + ADP. The protein operates within amino-acid biosynthesis; L-arginine biosynthesis; N(2)-acetyl-L-ornithine from L-glutamate: step 2/4. Its function is as follows. Catalyzes the ATP-dependent phosphorylation of N-acetyl-L-glutamate. The protein is Acetylglutamate kinase of Nostoc sp. (strain PCC 7120 / SAG 25.82 / UTEX 2576).